A 419-amino-acid polypeptide reads, in one-letter code: GTPase Obg (419 aa).

The region spanning 1 to 156 (MRFVDYVSIE…FYLDLQLKVM (156 aa)) is the Obg domain. The region spanning 157 to 334 (ADIGLVGKPN…LGENQKKLEI (178 aa)) is the OBG-type G domain. GTP-binding positions include 163 to 170 (GKPNAGKS), 188 to 192 (FTTLV), 209 to 212 (DLPG), 278 to 281 (NKCD), and 315 to 317 (NII). Positions 170 and 190 each coordinate Mg(2+). The OCT domain maps to 342–419 (IEFNLKAPFL…RIYEFEFHWN (78 aa)).

The protein belongs to the TRAFAC class OBG-HflX-like GTPase superfamily. OBG GTPase family. As to quaternary structure, monomer. The cofactor is Mg(2+).

It localises to the cytoplasm. In terms of biological role, an essential GTPase which binds GTP, GDP and possibly (p)ppGpp with moderate affinity, with high nucleotide exchange rates and a fairly low GTP hydrolysis rate. Plays a role in control of the cell cycle, stress response, ribosome biogenesis and in those bacteria that undergo differentiation, in morphogenesis control. The protein is GTPase Obg of Mesomycoplasma hyopneumoniae (strain 7448) (Mycoplasma hyopneumoniae).